We begin with the raw amino-acid sequence, 272 residues long: Short-chain dehydrogenase/reductase iacC (272 aa).

Isoleucine 13, aspartate 59, and asparagine 88 together coordinate NADP(+). Residues serine 150 and tyrosine 169 each act as proton donor in the active site. Tyrosine 169, lysine 173, and valine 202 together coordinate NADP(+). Lysine 173 (lowers pKa of active site Tyr) is an active-site residue.

It belongs to the short-chain dehydrogenases/reductases (SDR) family.

Its pathway is secondary metabolite biosynthesis. Short-chain dehydrogenase/reductase; part of the gene cluster that mediates the biosynthesis of iso-A82775C, a enylepoxycyclohexane and biosynthetic precursor of the chloropestolide anticancer natural products. Within the cluster, the prenyltransferase iacE prenylates siccayne to generate pestalodiol E, using dimethylallyl diphosphate (DMAPP) as cosubstrate. The probable oxidoreductase iacF is then involved in the epoxidation of pestalodiol F to pestalodiol F, which is further converted to pestalofone A by the short-chain dehydrogenase/reductase iacG. Iso-A82775C is subsequently generated from pestalofone A by the short-chain dehydrogenase/reductase iacC. Iso-A82775C is further condensed with maldoxin via a Diels-Alder reaction to produce the anticancer natural products chloropestolides A to E. This Pestalotiopsis fici (strain W106-1 / CGMCC3.15140) protein is Short-chain dehydrogenase/reductase iacC.